A 426-amino-acid chain; its full sequence is Phytoene synthase 3, chloroplastic (426 aa).

The N-terminal 52 residues, 1-52 (MMSTSRAVKSPACAARRRQWSADAPNRTATFLACRHGRRLGGGGGAPCSVRA), are a transit peptide targeting the chloroplast.

The protein belongs to the phytoene/squalene synthase family. In terms of tissue distribution, expressed in roots and endosperm.

Its subcellular location is the plastid. It localises to the chloroplast. The protein resides in the plastoglobule. The catalysed reaction is 2 (2E,6E,10E)-geranylgeranyl diphosphate = 15-cis-phytoene + 2 diphosphate. In terms of biological role, catalyzes the conversion of geranylgeranyl diphosphate to phytoene. Mediates the first committed step in carotenoid biosynthesis. May play a role in regulating carotenoid flux in response to abiotic stress in roots. May control flux to carotenoid precursors that are required for abiotic stress-induced abscisic acid (ABA) formation in roots. The chain is Phytoene synthase 3, chloroplastic from Zea mays (Maize).